The chain runs to 268 residues: Tryptophan synthase alpha chain (268 aa).

Residues E49 and D60 each act as proton acceptor in the active site.

The protein belongs to the TrpA family. Tetramer of two alpha and two beta chains.

The catalysed reaction is (1S,2R)-1-C-(indol-3-yl)glycerol 3-phosphate + L-serine = D-glyceraldehyde 3-phosphate + L-tryptophan + H2O. Its pathway is amino-acid biosynthesis; L-tryptophan biosynthesis; L-tryptophan from chorismate: step 5/5. Functionally, the alpha subunit is responsible for the aldol cleavage of indoleglycerol phosphate to indole and glyceraldehyde 3-phosphate. In Escherichia coli O127:H6 (strain E2348/69 / EPEC), this protein is Tryptophan synthase alpha chain.